The primary structure comprises 293 residues: Sphingolipid C4-hydroxylase sur2 (293 aa).

3 consecutive transmembrane segments (helical) span residues 18–38, 68–88, and 127–147; these read LVSP…LHYI, AVLF…MFEG, and FIVP…WQYF. Positions 136 to 270 constitute a Fatty acid hydroxylase domain; it reads FAFFIIDSWQ…FTFWDHVLGT (135 aa).

This sequence belongs to the sterol desaturase family.

It localises to the endoplasmic reticulum membrane. It participates in membrane lipid metabolism; sphingolipid biosynthesis. Functionally, required for hydroxylation of C-4 in the sphingoid moiety of ceramide. Involved in the response to syringomycin. The chain is Sphingolipid C4-hydroxylase sur2 (sur2) from Schizosaccharomyces pombe (strain 972 / ATCC 24843) (Fission yeast).